The primary structure comprises 394 residues: RILP-like protein 1 (394 aa).

Residues 2 to 89 form the RH1 domain; the sequence is EGISALEKNV…RLERMDRIEK (88 aa). A coiled-coil region spans residues 68–327; it reads EMEELRLELD…EAEEENKLPQ (260 aa). In terms of domain architecture, RH2 spans 282–347; the sequence is RPRFTLQELR…IPQESGIKRL (66 aa).

It belongs to the RILPL family.

The protein resides in the cytoplasm. Its subcellular location is the cytosol. The protein localises to the cytoskeleton. It is found in the microtubule organizing center. It localises to the centrosome. The protein resides in the cell projection. Its subcellular location is the cilium. Functionally, plays a role in the regulation of cell shape and polarity. Plays a role in cellular protein transport, including protein transport away from primary cilia. Neuroprotective protein. The sequence is that of RILP-like protein 1 (rilpl1) from Xenopus laevis (African clawed frog).